Here is a 351-residue protein sequence, read N- to C-terminus: GDP-mannose 4,6-dehydratase (351 aa).

Residues 11-16, 66-67, 88-92, and tyrosine 103 contribute to the NADP(+) site; these read GVTGQD, DM, and LAAQS. Threonine 135 is a catalytic residue. Residues glutamate 137 and tyrosine 159 each act as nucleophile in the active site. Residues lysine 163, histidine 189, and arginine 194 each coordinate NADP(+).

Belongs to the NAD(P)-dependent epimerase/dehydratase family. GDP-mannose 4,6-dehydratase subfamily. The cofactor is NADP(+).

The catalysed reaction is GDP-alpha-D-mannose = GDP-4-dehydro-alpha-D-rhamnose + H2O. It functions in the pathway nucleotide-sugar biosynthesis; GDP-L-fucose biosynthesis via de novo pathway; GDP-L-fucose from GDP-alpha-D-mannose: step 1/2. Its function is as follows. Catalyzes the conversion of GDP-D-mannose to GDP-4-dehydro-6-deoxy-D-mannose. The chain is GDP-mannose 4,6-dehydratase from Sinorhizobium fredii (strain HH103).